The chain runs to 1464 residues: Alpha-glucan water dikinase, chloroplastic (1464 aa).

Residues 1–77 (MSNSLGNNLL…KRAFSSSPHA (77 aa)) constitute a chloroplast transit peptide. The active-site Tele-phosphohistidine intermediate is His-1069.

It belongs to the PEP-utilizing enzyme family. In terms of assembly, homodimer. Requires Mg(2+) as cofactor. Expressed in leaves.

The protein localises to the plastid. Its subcellular location is the chloroplast. The enzyme catalyses [(1-&gt;4)-alpha-D-glucosyl](n) + n ATP + n H2O = [(1-&gt;4)-6-phospho-alpha-D-glucosyl](n) + n AMP + n phosphate + 2n H(+). It carries out the reaction ATP + protein L-histidine = ADP + protein N-phospho-L-histidine.. Mediates the incorporation of phosphate into starch-like alpha-glucan, mostly at the C-6 position of glucose units. Acts as an overall regulator of starch mobilization. Required for starch degradation, suggesting that the phosphate content of starch regulates its degradability. More active on alpha-1,6 branched amylopectin. In Solanum tuberosum (Potato), this protein is Alpha-glucan water dikinase, chloroplastic (R1).